Here is a 306-residue protein sequence, read N- to C-terminus: Mitochondrial uncoupling protein 1 (306 aa).

Solcar repeat units follow at residues 9–102 (LSLP…VKNL), 112–203 (VPLS…VKET), and 212–296 (DNVV…AKKY). The next 6 membrane-spanning stretches (helical) occupy residues 15–35 (FACSAFAACVGEVCTIPLDTA), 71–91 (LRSLWKGVVPGLHRQCLFGGL), 118–138 (ILAGLTTGALGIMVANPTDLV), 177–197 (TGLGPNVARNAIINAAELASY), 218–238 (ILSGLGAGFFAVCIGSPVDVV), and 269–289 (YKGFIPNFGRLGSWNVIMFLT).

Belongs to the mitochondrial carrier (TC 2.A.29) family. As to expression, widely expressed.

It is found in the mitochondrion inner membrane. Functionally, PUMPS are mitochondrial transporter proteins that create proton leaks across the inner mitochondrial membrane, thus uncoupling oxidative phosphorylation. This leads to a decrease in the efficiency of oxidative phosphorylation and an increase in heat production. Is involved in protecting plant cells against oxidative stress damage and maintaining the redox balance of the mitochondrial electron transport chain to facilitate photosynthetic metabolism. May play a regulatory role during photorespiration. In Arabidopsis thaliana (Mouse-ear cress), this protein is Mitochondrial uncoupling protein 1 (PUMP1).